Here is a 316-residue protein sequence, read N- to C-terminus: L-lactate dehydrogenase 3 (316 aa).

V16, D37, R42, and Y68 together coordinate NAD(+). A substrate-binding site is contributed by R91. NAD(+) contacts are provided by residues S104, 121 to 123, and T146; that span reads ASN. 123–126 provides a ligand contact to substrate; it reads NPVD. 151-154 contacts substrate; the sequence is DSSR. Beta-D-fructose 1,6-bisphosphate contacts are provided by R156 and H171. H178 serves as the catalytic Proton acceptor. T233 is a substrate binding site.

The protein belongs to the LDH/MDH superfamily. LDH family. Homotetramer.

The protein localises to the cytoplasm. The enzyme catalyses (S)-lactate + NAD(+) = pyruvate + NADH + H(+). Its pathway is fermentation; pyruvate fermentation to lactate; (S)-lactate from pyruvate: step 1/1. Allosterically activated by fructose 1,6-bisphosphate (FBP). In terms of biological role, catalyzes the conversion of lactate to pyruvate. This Bacillus cereus (strain ATCC 14579 / DSM 31 / CCUG 7414 / JCM 2152 / NBRC 15305 / NCIMB 9373 / NCTC 2599 / NRRL B-3711) protein is L-lactate dehydrogenase 3.